The following is a 462-amino-acid chain: Steroidogenic factor 1 (462 aa).

Positions 10–85 (DELCPVCGDK…VGMRLEAVRA (76 aa)) form a DNA-binding region, nuclear receptor. Residues 13 to 33 (CPVCGDKVSGYHYGLLTCESC) form an NR C4-type zinc finger. 3 positions are modified to N6-acetyllysine: lysine 34, lysine 38, and lysine 72. An NR C4-type zinc finger spans residues 49–73 (CTESQSCKIDKTQRKRCPFCRFQKC). Residues 117-149 (GFKLETGPPMGVPPPPPPPPDYMLPPSLHAPEP) are disordered. Lysine 119 is covalently cross-linked (Glycyl lysine isopeptide (Lys-Gly) (interchain with G-Cter in SUMO)). Residues 126 to 139 (MGVPPPPPPPPDYM) show a composition bias toward pro residues. Lysine 194 participates in a covalent cross-link: Glycyl lysine isopeptide (Lys-Gly) (interchain with G-Cter in SUMO). Position 203 is a phosphoserine; by CDK7 (serine 203). Positions 223–460 (NVPELILQLL…NLLIEMLQAK (238 aa)) constitute an NR LBD domain. Residues glycine 342, tyrosine 437, and lysine 441 each coordinate a 1,2-diacyl-sn-glycero-3-phosphocholine.

This sequence belongs to the nuclear hormone receptor family. NR5 subfamily. In terms of assembly, binds DNA as a monomer. Part of a complex consisting of SFPQ, NONO and NR5A1. Interacts with NR0B2, NCOA2 and PPARGC1A. Interacts with DGKQ and CDK7. Binds to and activated by HIPK3. In terms of processing, acetylation stimulates the transcriptional activity. Sumoylation reduces CDK7-mediated phosphorylation on Ser-203. Post-translationally, phosphorylated on Ser-203 by CDK7. This phosphorylation promotes transcriptional activity.

Its subcellular location is the nucleus. In terms of biological role, transcriptional activator. Seems to be essential for sexual differentiation and formation of the primary steroidogenic tissues. Binds to the Ad4 site found in the promoter region of steroidogenic P450 genes such as CYP11A, CYP11B and CYP21B. Also regulates the AMH/Muellerian inhibiting substance gene as well as the AHCH and STAR genes. 5'-YCAAGGYC-3' and 5'-RRAGGTCA-3' are the consensus sequences for the recognition by NR5A1. The SFPQ-NONO-NR5A1 complex binds to the CYP17 promoter and regulates basal and cAMP-dependent transcriptional activity. Binds phosphatidylcholine and phospholipids with a phosphatidylinositol (PI) headgroup, in particular PI(3,4)P2 and PI(3,4,5)P3. Activated by the phosphorylation of NR5A1 by HIPK3 leading to increased steroidogenic gene expression upon cAMP signaling pathway stimulation. This chain is Steroidogenic factor 1 (Nr5a1), found in Rattus norvegicus (Rat).